The sequence spans 137 residues: Small ribosomal subunit protein uS12 (137 aa).

The tract at residues 1–57 (MPTINQLVRKPRQSKIKKSDSPALNKGFNSKKKKFTDLNSPQKRGVCTRVGTMTPRK) is disordered. A 3-methylthioaspartic acid modification is found at Asp102. Residues 118 to 137 (SGVDGRRQGRSLYGTKKPKN) are disordered.

It belongs to the universal ribosomal protein uS12 family. As to quaternary structure, part of the 30S ribosomal subunit. Contacts proteins S8 and S17. May interact with IF1 in the 30S initiation complex.

Functionally, with S4 and S5 plays an important role in translational accuracy. Its function is as follows. Interacts with and stabilizes bases of the 16S rRNA that are involved in tRNA selection in the A site and with the mRNA backbone. Located at the interface of the 30S and 50S subunits, it traverses the body of the 30S subunit contacting proteins on the other side and probably holding the rRNA structure together. The combined cluster of proteins S8, S12 and S17 appears to hold together the shoulder and platform of the 30S subunit. The chain is Small ribosomal subunit protein uS12 from Staphylococcus aureus (strain COL).